The following is a 439-amino-acid chain: Proline--tRNA ligase (439 aa).

Belongs to the class-II aminoacyl-tRNA synthetase family. ProS type 2 subfamily. Homodimer.

The protein localises to the cytoplasm. It carries out the reaction tRNA(Pro) + L-proline + ATP = L-prolyl-tRNA(Pro) + AMP + diphosphate. Its function is as follows. Catalyzes the attachment of proline to tRNA(Pro) in a two-step reaction: proline is first activated by ATP to form Pro-AMP and then transferred to the acceptor end of tRNA(Pro). This Nitrobacter winogradskyi (strain ATCC 25391 / DSM 10237 / CIP 104748 / NCIMB 11846 / Nb-255) protein is Proline--tRNA ligase.